Here is a 273-residue protein sequence, read N- to C-terminus: Galactose-binding lectin (273 aa).

The N-terminal stretch at 1-23 (MKPFCVFLTFFLLLAASSKKVDS) is a signal peptide. Mn(2+) is bound by residues E144 and D146. Positions 146, 148, 150, and 155 each coordinate Ca(2+). Mn(2+)-binding residues include D155 and H160.

The protein belongs to the leguminous lectin family. In terms of assembly, homotetramer.

In terms of biological role, D-galactose specific lectin. This chain is Galactose-binding lectin, found in Arachis hypogaea (Peanut).